We begin with the raw amino-acid sequence, 563 residues long: AP-1-like transcription factor yap1 (563 aa).

Positions 23 to 179 (LAALSSNQPP…AFRERKEKHL (157 aa)) are disordered. The Bipartite nuclear localization signal signature appears at 35–42 (QQNDKQRS). The segment covering 36–48 (QNDKQRSQAKTDP) has biased composition (basic and acidic residues). Residues 52–67 (PGNMSSGSFSMSPGFN) are compositionally biased toward low complexity. The short motif at 68–75 (KTHPGSGG) is the Bipartite nuclear localization signal element. A compositionally biased stretch (acidic residues) spans 79–94 (GDDESPFLDFNPELDF). Composition is skewed to basic and acidic residues over residues 112–144 (SEEHEVGEKRKDMSDNENEESGKKRRESDDKAA) and 170–179 (AFRERKEKHL). Residues 154–217 (SEPTSKRKAQ…ERLQVELREY (64 aa)) form the bZIP domain. The interval 159–180 (KRKAQNRAAQRAFRERKEKHLK) is basic motif. Residues 182 to 189 (LETKVDEL) are leucine-zipper. The interval 211–332 (QVELREYRKR…PSPKVPSVYN (122 aa)) is transcription activation 1. Disordered regions lie at residues 267–380 (IFNG…KLND) and 394–420 (DAVRGKSESVSNTPSQPNNNYEQTPGP). The tract at residues 284-296 (SSPATSDSQVPGV) is n-CRD. Over residues 300–309 (ETLNGSNNRG) the composition is skewed to polar residues. Over residues 336 to 362 (SASSHDSSNSCSPSSSSDSHQSQMLSS) the composition is skewed to low complexity. 2 stretches are compositionally biased toward polar residues: residues 363 to 380 (NGTSPEPSSNSPATKLND) and 401 to 416 (ESVSNTPSQPNNNYEQ). The segment at 377-459 (KLNDSVQNHH…SQDFGTFFDD (83 aa)) is transcription activation 2. Intrachain disulfides connect cysteine 510-cysteine 534, cysteine 510-cysteine 543, and cysteine 534-cysteine 543. The c-CRD stretch occupies residues 510 to 543 (CTKIWDRLQSMEKFRNGEIDVDNLCSELRTKARC). The Nuclear export signal signature appears at 528 to 535 (IDVDNLCS).

Belongs to the bZIP family. YAP subfamily. Depending on the oxidative stress inducing agent, yap1 can undergo two distinct conformational changes, both involving disulfide bond formation, and both masking the nuclear export signal, thus abolishing nuclear export.

Its subcellular location is the nucleus. It is found in the cytoplasm. Functionally, transcription activator involved in oxidative stress response and redox homeostasis. Regulates the transcription of genes encoding antioxidant enzymes and components of the cellular thiol-reducing pathways. The sequence is that of AP-1-like transcription factor yap1 from Aspergillus oryzae (strain ATCC 42149 / RIB 40) (Yellow koji mold).